The chain runs to 558 residues: MSFKTDAEIAQSSTMRPIGEIAAKLGLNADNIEPYGHYKAKINPAEAFKLPQKQGRLILVTAINPTPAGEGKTTVTIGLADALRHIGKDAVIALREPSLGPVFGVKGGAAGGGYAQVLPMEDINLHFTGDFHAIGAANNLLAAMLDNHIYQGNELDIDPKRVLWRRVVDMNDRQLRNIIDGMGKPVDGVMRPDGFDITVASEVMAVFCLAKDISDLKERLGNILVAYAKDGSPVYAKDLKAHGAMAVLLKDAIKPNLVQTIEGTPAFVHGGPFANIAHGCNSVTATRLAKHLADYAVTEAGFGADLGAEKFCDIKCRLAGLKPDAAVVVATVRALKYNGGVERANLGEENLEALAKGLPNLLKHISNLKNVFGLPVVVALNRFVSDSDAELAMIEKACAEHGVEVSLTEVWGKGGVGGADLARKVVNAIENQPNNFNFSYDVELSIKDKIRAIAQKVYGAEDVDFSAEASAEIASLEKLGLDKMPICMAKTQYSLSDNAKLLGCPEGFRITVRGITVSSGAGFIVALCGNMMKMPGLPKVPAAEKIDVDAEGVIHGLF.

Residue 66–73 coordinates ATP; sequence TPAGEGKT.

Belongs to the formate--tetrahydrofolate ligase family.

The catalysed reaction is (6S)-5,6,7,8-tetrahydrofolate + formate + ATP = (6R)-10-formyltetrahydrofolate + ADP + phosphate. It participates in one-carbon metabolism; tetrahydrofolate interconversion. In Neisseria meningitidis serogroup C / serotype 2a (strain ATCC 700532 / DSM 15464 / FAM18), this protein is Formate--tetrahydrofolate ligase.